The following is a 331-amino-acid chain: Pantothenate kinase (331 aa).

109 to 116 serves as a coordination point for ATP; sequence GSVAVGKS.

This sequence belongs to the prokaryotic pantothenate kinase family.

It is found in the cytoplasm. The enzyme catalyses (R)-pantothenate + ATP = (R)-4'-phosphopantothenate + ADP + H(+). It participates in cofactor biosynthesis; coenzyme A biosynthesis; CoA from (R)-pantothenate: step 1/5. This Rhizobium leguminosarum bv. trifolii (strain WSM2304) protein is Pantothenate kinase.